The following is a 517-amino-acid chain: 6-phosphogluconate dehydrogenase, decarboxylating (517 aa).

Residues 35-40 (GLAVMG), 58-60 (NRT), 100-102 (VKA), and Asn-128 contribute to the NADP(+) site. Substrate is bound by residues Asn-128 and 154-156 (SGG). Lys-208 functions as the Proton acceptor in the catalytic mechanism. Substrate is bound at residue 211 to 212 (HN). Residue Glu-215 is the Proton donor of the active site. Substrate contacts are provided by Tyr-216, Lys-286, Arg-313, Arg-474, and His-480.

The protein belongs to the 6-phosphogluconate dehydrogenase family. In terms of assembly, homodimer.

The enzyme catalyses 6-phospho-D-gluconate + NADP(+) = D-ribulose 5-phosphate + CO2 + NADPH. It functions in the pathway carbohydrate degradation; pentose phosphate pathway; D-ribulose 5-phosphate from D-glucose 6-phosphate (oxidative stage): step 3/3. Functionally, catalyzes the oxidative decarboxylation of 6-phosphogluconate to ribulose 5-phosphate and CO(2), with concomitant reduction of NADP to NADPH. This chain is 6-phosphogluconate dehydrogenase, decarboxylating (DOR14), found in Candida albicans (Yeast).